The primary structure comprises 360 residues: Protein Wnt-2 (360 aa).

An N-terminal signal peptide occupies residues methionine 1–serine 26. 11 disulfide bridges follow: cysteine 76–cysteine 87, cysteine 127–cysteine 135, cysteine 137–cysteine 157, cysteine 206–cysteine 220, cysteine 208–cysteine 215, cysteine 278–cysteine 309, cysteine 294–cysteine 304, cysteine 308–cysteine 348, cysteine 324–cysteine 339, cysteine 326–cysteine 336, and cysteine 331–cysteine 332. Serine 212 carries the O-palmitoleoyl serine; by PORCN lipid modification. N-linked (GlcNAc...) asparagine glycosylation occurs at asparagine 295.

It belongs to the Wnt family. Palmitoleoylation is required for efficient binding to frizzled receptors. Depalmitoleoylation leads to Wnt signaling pathway inhibition.

It is found in the secreted. It localises to the extracellular space. The protein resides in the extracellular matrix. Functionally, ligand for members of the frizzled family of seven transmembrane receptors. Probable developmental protein. May be a signaling molecule which affects the development of discrete regions of tissues. Is likely to signal over only few cell diameters. The sequence is that of Protein Wnt-2 (WNT2) from Eulemur macaco macaco (Black lemur).